The sequence spans 551 residues: MGNCCRSPAAAAREDVKSSHFPASAGKKKPHQARNGGVGGGGGGGGGGGGGGGAGQKRLPVLGEEGCELIGGIDDKYALDRELGRGEFGVTYLCMDRDTKELLACKSISKRKLRTAVDVEDVRREVAIMRHLPKSASIVSLREACEDEGAVHLVMELCEGGELFDRIVARGHYTERAAANVTRTIVEVVQLCHRHGVIHRDLKPENFLFANKKENSPLKAIDFGLSIFFKPGEKFSEIVGSPYYMAPEVLKRNYGPEIDIWSAGVILYILLCGVPPFWAETEQGVAQAILRGNIDFKREPWPNVSENAKDLVRRMLEPDPKLRLTAKQVLEHPWLQNAKKAPNVPLGDIVKSRLKQFSRMNRFKRRALRVIADHLSAEEVEDIKEMFKAMDTDNDGIVSYEELKSGIAKFGSHLAESEVQMLIEAVDTNGKDALDYGEFLAVSLHLQRMANDEHLRRAFLFFDKDGNGYIEPEELREALVDDGAGDSMEVVNDILQEVDTDKDGKISYDEFVAMMKTGTDWRKASRHYSRGRFNSLSMKLIKDGSVKLVNE.

The disordered stretch occupies residues 1–57 (MGNCCRSPAAAAREDVKSSHFPASAGKKKPHQARNGGVGGGGGGGGGGGGGGGAGQK). Glycine 2 is lipidated: N-myristoyl glycine. Residues 36-55 (GGVGGGGGGGGGGGGGGGAG) are compositionally biased toward gly residues. The 259-residue stretch at 77-335 (YALDRELGRG…AKQVLEHPWL (259 aa)) folds into the Protein kinase domain. ATP-binding positions include 83-91 (LGRGEFGVT) and lysine 106. Residue aspartate 201 is the Proton acceptor of the active site. Residues 341–371 (APNVPLGDIVKSRLKQFSRMNRFKRRALRVI) form an autoinhibitory domain region. EF-hand domains lie at 378–413 (EEVEDIKEMFKAMDTDNDGIVSYEELKSGIAKFGSH), 414–449 (LAESEVQMLIEAVDTNGKDALDYGEFLAVSLHLQRM), 450–485 (ANDEHLRRAFLFFDKDGNGYIEPEELREALVDDGAG), and 486–521 (DSMEVVNDILQEVDTDKDGKISYDEFVAMMKTGTDW). Positions 391, 393, 395, 402, 427, 429, 438, 463, 465, 467, 469, 474, 499, 501, 503, 505, and 510 each coordinate Ca(2+).

Belongs to the protein kinase superfamily. Ser/Thr protein kinase family. CDPK subfamily. Expressed in roots and developing seeds.

It localises to the membrane. The catalysed reaction is L-seryl-[protein] + ATP = O-phospho-L-seryl-[protein] + ADP + H(+). The enzyme catalyses L-threonyl-[protein] + ATP = O-phospho-L-threonyl-[protein] + ADP + H(+). Its activity is regulated as follows. Activated by calcium. Autophosphorylation may play an important role in the regulation of the kinase activity. Functionally, may play a role in signal transduction pathways that involve calcium as a second messenger. In Oryza sativa subsp. japonica (Rice), this protein is Calcium-dependent protein kinase 3.